We begin with the raw amino-acid sequence, 414 residues long: xyloglucan O-acetyltransferase 2 (414 aa).

The Cytoplasmic segment spans residues 1–26 (MKSSSSIFRETSEKKSERWMMMNIGR). Residues 27–47 (FSPFFLSSFCITLFFTGFFVY) form a helical; Signal-anchor for type II membrane protein membrane-spanning segment. At 48 to 414 (QNPFKSIADQ…FLMAIIRQLR (367 aa)) the chain is on the lumenal side. Disulfide bonds link C70-C120, C91-C156, C100-C394, and C317-C390. N88 carries N-linked (GlcNAc...) asparagine glycosylation. Residues 143–145 (GDS) carry the GDS motif motif. Residue S145 is the Nucleophile of the active site. N205, N263, and N308 each carry an N-linked (GlcNAc...) asparagine glycan. Catalysis depends on D389, which acts as the Proton donor. A DXXH motif motif is present at residues 389–392 (DCVH). The active-site Proton acceptor is H392.

It belongs to the PC-esterase family. TBL subfamily.

It is found in the membrane. Xyloglucan acetyltransferase that catalyzes the acetylation of fucosylated Gal residues on xyloglucan side chains. Predominantly catalyze 6-O-monoacetylation of Gal residues in the Fuc-Gal-Xyl trisaccharide side chains of xyloglucan oligomers. Involved in xyloglucan specific O-acetylation in seeds. The sequence is that of xyloglucan O-acetyltransferase 2 from Arabidopsis thaliana (Mouse-ear cress).